Consider the following 140-residue polypeptide: Protein ApaG (140 aa).

Residues 13–137 enclose the ApaG domain; sequence EARTRDIVVR…FSLHLPGAAM (125 aa).

The sequence is that of Protein ApaG from Caulobacter vibrioides (strain ATCC 19089 / CIP 103742 / CB 15) (Caulobacter crescentus).